We begin with the raw amino-acid sequence, 311 residues long: Bifunctional protein FolD (311 aa).

NADP(+) is bound by residues 180–182, serine 209, and isoleucine 250; that span reads GRS.

This sequence belongs to the tetrahydrofolate dehydrogenase/cyclohydrolase family. In terms of assembly, homodimer.

It catalyses the reaction (6R)-5,10-methylene-5,6,7,8-tetrahydrofolate + NADP(+) = (6R)-5,10-methenyltetrahydrofolate + NADPH. The catalysed reaction is (6R)-5,10-methenyltetrahydrofolate + H2O = (6R)-10-formyltetrahydrofolate + H(+). Its pathway is one-carbon metabolism; tetrahydrofolate interconversion. Its function is as follows. Catalyzes the oxidation of 5,10-methylenetetrahydrofolate to 5,10-methenyltetrahydrofolate and then the hydrolysis of 5,10-methenyltetrahydrofolate to 10-formyltetrahydrofolate. The polypeptide is Bifunctional protein FolD (Haloquadratum walsbyi (strain DSM 16790 / HBSQ001)).